A 62-amino-acid polypeptide reads, in one-letter code: Large ribosomal subunit protein bL28 (62 aa).

It belongs to the bacterial ribosomal protein bL28 family.

This chain is Large ribosomal subunit protein bL28, found in Helicobacter pylori (strain P12).